A 242-amino-acid chain; its full sequence is DNA repair protein RecO (242 aa).

This sequence belongs to the RecO family. Monomer.

Its function is as follows. Involved in DNA repair and RecF pathway recombination. The protein is DNA repair protein RecO of Salmonella dublin (strain CT_02021853).